Consider the following 426-residue polypeptide: Pistil-specific extensin-like protein (426 aa).

A signal peptide spans 1-23 (MAVIISSKVLLIQLFVLVLGSFS). Disordered stretches follow at residues 56–109 (GPTF…GSKL) and 121–254 (NLPD…AAEP). 4 stretches are compositionally biased toward pro residues: residues 60–94 (VLPPPSPLPSPPPPSPSPPPPSPSPPPPSTIPLIP), 123–161 (PDVPPIGGGPPVNQPKPSSPSPLVKPPPPPPSPCKPSPP), 168–224 (PPQP…PPPP), and 231–254 (LLPPPPPVAYPPVMTPSPSPAAEP). 3 repeat units span residues 69-73 (SPPPP), 76-80 (SPPPP), and 83-87 (SPPPP). The segment at 69–182 (SPPPPSPSPP…PAKQPSPPPP (114 aa)) is 4 X 5 AA repeats of S-P(4). Repeat unit 4 spans residues 178–182 (SPPPP). Residue Asn310 is glycosylated (N-linked (GlcNAc...) asparagine).

As to expression, pistil (stigma and style tissue).

In Nicotiana tabacum (Common tobacco), this protein is Pistil-specific extensin-like protein.